The sequence spans 463 residues: RuvB-like 2 (463 aa).

An N-acetylalanine modification is found at Ala-2. Residue Lys-9 forms a Glycyl lysine isopeptide (Lys-Gly) (interchain with G-Cter in SUMO2) linkage. 77-84 (GQPGTGKT) provides a ligand contact to ATP. Ser-437 is subject to Phosphoserine. Residues Lys-444 and Lys-456 each participate in a glycyl lysine isopeptide (Lys-Gly) (interchain with G-Cter in SUMO2) cross-link.

The protein belongs to the RuvB family. Forms homohexameric rings. Can form a dodecamer with RUVBL1 made of two stacked hexameric rings; however, even though RUVBL1 and RUVBL2 are present in equimolar ratio, the oligomeric status of each hexamer is not known. Oligomerization may regulate binding to nucleic acids and conversely, binding to nucleic acids may affect the dodecameric assembly. Interaction of the complex with DHX34 results in conformational changes of the N-terminus of the RUVBL2 subunits, resulting in loss of nucleotide binding ability and ATP hydrolysis of the complex. Interacts with the transcriptional activation domain of MYC. Interacts with ATF2. Component of the RNA polymerase II holoenzyme complex. May also act to bridge the LEF1/TCF1-CTNNB1 complex and TBP. Component of the NuA4 histone acetyltransferase complex which contains the catalytic subunit KAT5/TIP60 and the subunits EP400, TRRAP/PAF400, BRD8/SMAP, EPC1, DMAP1/DNMAP1, RUVBL1/TIP49, RUVBL2, ING3, actin, ACTL6A/BAF53A, MORF4L1/MRG15, MORF4L2/MRGX, MRGBP, YEATS4/GAS41, VPS72/YL1 and MEAF6. The NuA4 complex interacts with MYC and the adenovirus E1A protein. RUVBL2 interacts with EP400. Component of a NuA4-related complex which contains EP400, TRRAP/PAF400, SRCAP, BRD8/SMAP, EPC1, DMAP1/DNMAP1, RUVBL1/TIP49, RUVBL2, actin, ACTL6A/BAF53A, VPS72 and YEATS4/GAS41. Interacts with NPAT. Component of the chromatin-remodeling INO80 complex; specifically part of a complex module associated with the helicase ATP-binding and the helicase C-terminal domain of INO80. Component of some MLL1/MLL complex, at least composed of the core components KMT2A/MLL1, ASH2L, HCFC1/HCF1, WDR5 and RBBP5, as well as the facultative components BACC1, CHD8, E2F6, HSP70, INO80C, KANSL1, LAS1L, MAX, MCRS1, MGA, MYST1/MOF, PELP1, PHF20, PRP31, RING2, RUVB1/TIP49A, RUVB2/TIP49B, SENP3, TAF1, TAF4, TAF6, TAF7, TAF9 and TEX10. Interacts with IGHMBP2. Interacts with TELO2. Interacts with HINT1. Component of a SWR1-like complex. Component of the R2TP complex composed at least of RUVBL1, RUVBL2, RPAP3 and PIHD1. Component of the PAQosome complex which is responsible for the biogenesis of several protein complexes and which consists of R2TP complex members RUVBL1, RUVBL2, RPAP3 and PIH1D1, URI complex members PFDN2, PFDN6, PDRG1, UXT and URI1 as well as ASDURF, POLR2E and DNAAF10/WDR92. Interacts with ITFG1. Interacts with ZMYND10. Interacts with WAC; WAC positively regulates MTOR activity by promoting the assembly of the TTT complex composed of TELO2, TTI1 and TTI2 and the RUVBL complex composed of RUVBL1 and RUVBL2 into the TTT-RUVBL complex which leads to the dimerization of the mTORC1 complex and its subsequent activation. Forms a complex with APPL1 and APPL2. Interacts with ZNHIT2 (via HIT-type zinc finger) in the presence of ATP or ADP; shows a stronger interaction in the presence of ADP. The RUVBL1/RUVBL2 complex interacts with ZNHIT1 (via HIT-type zinc finger), ZNHIT3 (via HIT-type zinc finger), ZNHIT6 (via HIT-type zinc finger) and DDX59/ZNHIT5 (via HIT-type zinc finger) in the presence of ADP. Interacts with NOPCHAP1; the interaction is direct and disrupted upon ATP binding. Interacts with SMG1.

It localises to the nucleus matrix. It is found in the nucleus. Its subcellular location is the nucleoplasm. The protein resides in the cytoplasm. The protein localises to the membrane. It localises to the dynein axonemal particle. The catalysed reaction is ATP + H2O = ADP + phosphate + H(+). Possesses single-stranded DNA-stimulated ATPase and ATP-dependent DNA helicase (5' to 3') activity; hexamerization is thought to be critical for ATP hydrolysis and adjacent subunits in the ring-like structure contribute to the ATPase activity. Component of the NuA4 histone acetyltransferase complex which is involved in transcriptional activation of select genes principally by acetylation of nucleosomal histones H4 and H2A. This modification may both alter nucleosome-DNA interactions and promote interaction of the modified histones with other proteins which positively regulate transcription. This complex may be required for the activation of transcriptional programs associated with oncogene and proto-oncogene mediated growth induction, tumor suppressor mediated growth arrest and replicative senescence, apoptosis, and DNA repair. The NuA4 complex ATPase and helicase activities seem to be, at least in part, contributed by the association of RUVBL1 and RUVBL2 with EP400. NuA4 may also play a direct role in DNA repair when recruited to sites of DNA damage. Component of a SWR1-like complex that specifically mediates the removal of histone H2A.Z/H2AZ1 from the nucleosome. Proposed core component of the chromatin remodeling INO80 complex which exhibits DNA- and nucleosome-activated ATPase activity and catalyzes ATP-dependent nucleosome sliding. Plays an essential role in oncogenic transformation by MYC and also modulates transcriptional activation by the LEF1/TCF1-CTNNB1 complex. May also inhibit the transcriptional activity of ATF2. Involved in the endoplasmic reticulum (ER)-associated degradation (ERAD) pathway where it negatively regulates expression of ER stress response genes. May play a role in regulating the composition of the U5 snRNP complex. In Mus musculus (Mouse), this protein is RuvB-like 2 (Ruvbl2).